A 379-amino-acid chain; its full sequence is Chaperone protein DnaJ (379 aa).

One can recognise a J domain in the interval 5–70 (DYYEVLGVAK…QKRAAYDQYG (66 aa)). Residues 139–217 (GYDTQIRVPS…CHGAGKVKET (79 aa)) form a CR-type zinc finger. Zn(2+) is bound by residues cysteine 152, cysteine 155, cysteine 169, cysteine 172, cysteine 191, cysteine 194, cysteine 205, and cysteine 208. 4 CXXCXGXG motif repeats span residues 152 to 159 (CEICHGSG), 169 to 176 (CPTCSGSG), 191 to 198 (CPKCHGTG), and 205 to 212 (CGHCHGAG).

It belongs to the DnaJ family. As to quaternary structure, homodimer. Zn(2+) serves as cofactor.

Its subcellular location is the cytoplasm. Functionally, participates actively in the response to hyperosmotic and heat shock by preventing the aggregation of stress-denatured proteins and by disaggregating proteins, also in an autonomous, DnaK-independent fashion. Unfolded proteins bind initially to DnaJ; upon interaction with the DnaJ-bound protein, DnaK hydrolyzes its bound ATP, resulting in the formation of a stable complex. GrpE releases ADP from DnaK; ATP binding to DnaK triggers the release of the substrate protein, thus completing the reaction cycle. Several rounds of ATP-dependent interactions between DnaJ, DnaK and GrpE are required for fully efficient folding. Also involved, together with DnaK and GrpE, in the DNA replication of plasmids through activation of initiation proteins. The chain is Chaperone protein DnaJ from Paraburkholderia phytofirmans (strain DSM 17436 / LMG 22146 / PsJN) (Burkholderia phytofirmans).